An 809-amino-acid chain; its full sequence is Ubiquitin carboxyl-terminal hydrolase 1 (809 aa).

The 638-residue stretch at Ala101 to Asp738 folds into the USP domain. Residue Cys110 is the Nucleophile of the active site. The tract at residues Asn143–Pro195 is disordered. The segment covering Lys162–Ser183 has biased composition (basic residues). Residues Ser184–Glu194 are compositionally biased toward basic and acidic residues. 3 positions are modified to phosphoserine: Ser530, Ser531, and Ser555. The disordered stretch occupies residues Ala569–Glu596. Residues Ser618 and Ser638 each carry the phosphoserine modification. Position 652 is a phosphothreonine (Thr652). Phosphoserine occurs at positions 653, 654, and 670. Residue His697 is the Proton acceptor of the active site. Positions Leu750 to Asn809 are disordered. Ser755 carries the post-translational modification Phosphoserine. A compositionally biased stretch (basic and acidic residues) spans Gln765–Gln777. The span at Glu778–Gln789 shows a compositional bias: acidic residues. The segment covering Glu790 to Asn809 has biased composition (basic and acidic residues).

It belongs to the peptidase C19 family.

It carries out the reaction Thiol-dependent hydrolysis of ester, thioester, amide, peptide and isopeptide bonds formed by the C-terminal Gly of ubiquitin (a 76-residue protein attached to proteins as an intracellular targeting signal).. In terms of biological role, has an ATP-independent isopeptidase activity, cleaving at the C-terminus of the ubiquitin moiety in natural or engineered linear fusion proteins, irrespective of their size or the presence of an N-terminal extension to ubiquitin. This is Ubiquitin carboxyl-terminal hydrolase 1 (UBP1) from Saccharomyces cerevisiae (strain ATCC 204508 / S288c) (Baker's yeast).